The primary structure comprises 967 residues: Aminopeptidase N (967 aa).

The Cytoplasmic portion of the chain corresponds to 1 to 8; sequence MAKGFYIS. Residues 9–32 form a helical; Signal-anchor for type II membrane protein membrane-spanning segment; sequence KPVGILAILLGVAAVCTIIALSVV. Residues 33-66 form a cytosolic Ser/Thr-rich junction region; that stretch reads YSQEKNRSTESSTAASTAAPTGPTTTVATTLDQS. The Extracellular portion of the chain corresponds to 33–967; the sequence is YSQEKNRSTE…VVLRWFTENS (935 aa). A glycan (N-linked (GlcNAc...) asparagine) is linked at Asn38. The segment at 41–61 is disordered; that stretch reads TESSTAASTAAPTGPTTTVAT. A metalloprotease region spans residues 67 to 967; sequence KPWNVYRLPK…VVLRWFTENS (901 aa). N-linked (GlcNAc...) asparagine glycosylation is found at Asn84 and Asn126. Residue Tyr175 is modified to Sulfotyrosine. N-linked (GlcNAc...) asparagine glycans are attached at residues Asn233 and Asn338. 351 to 355 contributes to the substrate binding site; the sequence is GAMEN. His387 lines the Zn(2+) pocket. The active-site Proton acceptor is the Glu388. Zn(2+) is bound by residues His391 and Glu410. Tyr418 carries the sulfotyrosine modification. Asn626, Asn682, and Asn740 each carry an N-linked (GlcNAc...) asparagine glycan. An interaction with FCoV and TGEV spike glycoprotein region spans residues 670-840; that stretch reads ASAQKVPVTL…GALACSNQVW (171 aa). 2 disulfides stabilise this stretch: Cys762/Cys769 and Cys799/Cys835.

The protein belongs to the peptidase M1 family. Homodimer. Interacts with SLC6A19. As to quaternary structure, (Microbial infection) Interacts with FCoV, CCoV, TGEV and HCoV-229E spike glycoprotein. It depends on Zn(2+) as a cofactor. Sulfated. In terms of processing, N- and O-glycosylated. Post-translationally, may undergo proteolysis and give rise to a soluble form.

The protein localises to the cell membrane. The catalysed reaction is Release of an N-terminal amino acid, Xaa-|-Yaa- from a peptide, amide or arylamide. Xaa is preferably Ala, but may be most amino acids including Pro (slow action). When a terminal hydrophobic residue is followed by a prolyl residue, the two may be released as an intact Xaa-Pro dipeptide.. Its function is as follows. Broad specificity aminopeptidase which plays a role in the final digestion of peptides generated from hydrolysis of proteins by gastric and pancreatic proteases. Also involved in the processing of various peptides including peptide hormones, such as angiotensin III and IV, neuropeptides, and chemokines. May also be involved the cleavage of peptides bound to major histocompatibility complex class II molecules of antigen presenting cells. May have a role in angiogenesis and promote cholesterol crystallization. May have a role in amino acid transport by acting as binding partner of amino acid transporter SLC6A19 and regulating its activity. In terms of biological role, (Microbial infection) In case of feline coronavirus (FCoV) infection, serves as a receptor for FCoV spike glycoprotein. It is as well a receptor for other serogroup I coronaviruses, like canine coronavirus (CCoV), porcine transmissible gastroenteritis virus (TGEV), and human coronavirus 229E (HCoV-229E). Also serves as a receptor for infectious bronchitis virus (IBV, Arkansas 99 serotype) in serogroup III. The chain is Aminopeptidase N (ANPEP) from Felis catus (Cat).